Here is a 376-residue protein sequence, read N- to C-terminus: Glucose-1-phosphate adenylyltransferase (376 aa).

Residues Y101, G166, E181–K182, and S192 contribute to the alpha-D-glucose 1-phosphate site.

This sequence belongs to the bacterial/plant glucose-1-phosphate adenylyltransferase family. In terms of assembly, homotetramer.

The catalysed reaction is alpha-D-glucose 1-phosphate + ATP + H(+) = ADP-alpha-D-glucose + diphosphate. It functions in the pathway glycan biosynthesis; glycogen biosynthesis. In terms of biological role, involved in the biosynthesis of ADP-glucose, a building block required for the elongation reactions to produce glycogen. Catalyzes the reaction between ATP and alpha-D-glucose 1-phosphate (G1P) to produce pyrophosphate and ADP-Glc. The sequence is that of Glucose-1-phosphate adenylyltransferase from Bacillus cereus (strain ATCC 10987 / NRS 248).